Here is a 343-residue protein sequence, read N- to C-terminus: Lipopolysaccharide core biosynthesis glycosyltransferase LpsD (343 aa).

Belongs to the glycosyltransferase group 1 family. Glycosyltransferase 4 subfamily.

It participates in bacterial outer membrane biogenesis; LPS core biosynthesis. This Rhizobium meliloti (strain 1021) (Ensifer meliloti) protein is Lipopolysaccharide core biosynthesis glycosyltransferase LpsD (lpsD).